The sequence spans 187 residues: Alpha-D-galactose-binding lectin (187 aa).

The N-terminal stretch at 1–37 (MTFAKQSCFNSIILLSIATSYFKIGHKISELGNRIEK) is a signal peptide. An N-acetylthreonine modification is found at Thr39. N-acetyl-alpha-D-galactosamine is bound by residues 53 to 56 (HPKG), Asp64, 72 to 76 (DIHER), His101, Gly104, Glu112, 120 to 122 (DRH), His145, Gly148, Glu156, and 164 to 166 (DKH).

In terms of assembly, homodimer. Highest expression in the posterior part of the mantle. Highly expressed in gills and to a lesser extent in mid mantle and anterior muscle. Lowest expression in digestive gland and posterior adductor muscle. Scarcely detectable in hemocytes.

Agglutination of E.coli is inhibited by alpha-galactoside melibiose, but not by beta-galactoside lactose. In terms of biological role, alpha-D-galactose-binding lectin. Binds D-GalNAc, but not glucose or its derivatives. Has hemagglutinating activity towards rabbit erythrocytes. Agglutinates bacteria. Has bacteriostatic activity on both Gram-positive and Gram-negative bacteria including B.subtilis, S.aureus, E.coli and V.parahaemolyticus, respectively. Has a dose-dependent cytotoxic effect on the human globotriaosylceramide (Gb3)-expressing Epstein-Barr virus (EBV)-positive Burkitt's lymphoma (Raji) cell line. Has dose-dependent cytotoxic effect on another Burkitt's lymphoma (Ramos) cell line, which does not possess the EBV genome, but also expresses Gb3. Binds to Gb3 in these cells leading to phosphorylation of MEK1/2, ERK1/2, JNK and p38 kinase, activation of caspase-9/3 and to expression of p21 and tumor necrosis factor (TNF)-alpha. No cytotoxic effect on the human chronic myelogenous leukemia (K-562) cell line, which does not express Gb3. May be involved in innate immunity acting as an antibacterial or antifungal agent. May be a pattern recognition receptor (PRR) involved in recognition of glycans found on parasitic or symbiotic microorganisms. This is Alpha-D-galactose-binding lectin from Mytilus galloprovincialis (Mediterranean mussel).